Here is a 73-residue protein sequence, read N- to C-terminus: Protein SlyX homolog (73 aa).

The protein belongs to the SlyX family.

The protein is Protein SlyX homolog of Actinobacillus pleuropneumoniae serotype 5b (strain L20).